The chain runs to 275 residues: Ribosomal RNA small subunit methyltransferase A (275 aa).

Asn-27, Leu-29, Gly-54, Glu-76, Asp-102, and Asn-123 together coordinate S-adenosyl-L-methionine.

This sequence belongs to the class I-like SAM-binding methyltransferase superfamily. rRNA adenine N(6)-methyltransferase family. RsmA subfamily.

Its subcellular location is the cytoplasm. The catalysed reaction is adenosine(1518)/adenosine(1519) in 16S rRNA + 4 S-adenosyl-L-methionine = N(6)-dimethyladenosine(1518)/N(6)-dimethyladenosine(1519) in 16S rRNA + 4 S-adenosyl-L-homocysteine + 4 H(+). Its function is as follows. Specifically dimethylates two adjacent adenosines (A1518 and A1519) in the loop of a conserved hairpin near the 3'-end of 16S rRNA in the 30S particle. May play a critical role in biogenesis of 30S subunits. The sequence is that of Ribosomal RNA small subunit methyltransferase A from Chelativorans sp. (strain BNC1).